A 277-amino-acid chain; its full sequence is Zaragozic acid A biosynthesis cluster protein 1 (277 aa).

Its pathway is secondary metabolite biosynthesis. Functionally, part of the gene cluster that mediates the biosynthesis of squalestatin S1 (SQS1, also known as zaragozic acid A), a heavily oxidized fungal polyketide that offers potent cholesterol lowering activity by targeting squalene synthase (SS). SQS1 is composed of a 2,8-dioxobicyclic[3.2.1]octane-3,4,5-tricarboxyclic acid core that is connected to two lipophilic polyketide arms. These initial steps feature the priming of an unusual benzoic acid starter unit onto the highly reducing polyketide synthase clz14, followed by oxaloacetate extension and product release to generate a tricarboxylic acid containing product. The phenylalanine ammonia lyase (PAL) clz10 and the acyl-CoA ligase clz12 are involved in transforming phenylalanine into benzoyl-CoA. The citrate synthase-like protein clz17 is involved in connecting the C-alpha-carbons of the hexaketide chain and oxaloacetate to afford the tricarboxylic acid unit. The potential hydrolytic enzymes, clz11 and clz13, are in close proximity to pks2 and may participate in product release. On the other side, the tetraketide arm is synthesized by a the squalestatin tetraketide synthase clz2 and enzymatically esterified to the core in the last biosynthetic step, by the acetyltransferase clz6. The biosynthesis of the tetraketide must involve 3 rounds of chain extension. After the first and second rounds methyl-transfer occurs, and in all rounds of extension the ketoreductase and dehydratase are active. The enoyl reductase and C-MeT of clz2 are not active in the final round of extension. The acetyltransferase clz6 appears to have a broad substrate selectivity for its acyl CoA substrate, allowing the in vitro synthesis of novel squalestatins. The biosynthesis of SQS1 requires several oxidative steps likely performed by oxidoreductases clz3, clz15 and clz16. Finally, in support of the identification of the cluster as being responsible for SQS1 production, the cluster contains a gene encoding a putative squalene synthase (SS) clz20, suggesting a likely mechanism for self-resistance. This Cochliobolus lunatus (Filamentous fungus) protein is Zaragozic acid A biosynthesis cluster protein 1.